A 150-amino-acid chain; its full sequence is Large ribosomal subunit protein bL9 (150 aa).

This sequence belongs to the bacterial ribosomal protein bL9 family.

Functionally, binds to the 23S rRNA. This chain is Large ribosomal subunit protein bL9, found in Photobacterium profundum (strain SS9).